We begin with the raw amino-acid sequence, 451 residues long: MAGKRLFQDLDSDQENKSEKRIKSVLPSLASPISSVFGALISENTLRSVLEPVIRKVVRQEVEYGISKRFRLSRSSSFRIEAPEATTPTLKLIFRKNLMTPIFTGSKISDVDNNPLEIILVDDSNKPVNLNRPIKLDIVALHGDFPSGDKWTSDEFESNIIKERDGKRPLLAGEVSVTVRNGVATIGEIVFTDNSSWIRSRKFRIGAKVAKGSSGQGVVVCEAMTEAIVVRDHRGELYKKHHPPMLEDEVWRLEKIGKDGAFHKKLSSRHINTVQDFLKLSVVDVDELRQILGPGMSDRKWEVTLKHARECILGNKLYISRGPNFFMILNPICEVMKALIDGHVLSSQESLNQPYVKNLVRDAYSKGNFLEVGERTANEAALLTQGDDLDQQYAASHYQNIEIDKSYQQNGYVQERSTNNLEIVNEGYITTPAEFNICFTGSSSQNHINPF.

Residues 149-270 (DKWTSDEFES…AFHKKLSSRH (122 aa)) are DNA-binding.

Belongs to the plant ACBP60 protein family. In terms of assembly, (Microbial infection) Interacts with V.dahliae SCP41.

It localises to the nucleus. In terms of biological role, transcription activator that binds DNA in a sequence-specific manner, 5'-GAAATTTTGG-3', to promote the expression of target genes. Recruited to the promoter of ICS1 and other defense-related genes (e.g. PR1 and SID2) in response to both biotic (e.g. Pseudomonas syringae pv. maculicola ES4326) and abiotic stresses (e.g. UV-B), thus triggering slow defense responses by stimulating salicylic acid (SA) biosynthesis. Required for basal and systemic acquired resistance to P.syringae pv. maculicola and Hyaloperonospora arabidopsidis. The sequence is that of Protein SAR DEFICIENT 1 from Arabidopsis thaliana (Mouse-ear cress).